Consider the following 306-residue polypeptide: UDP-3-O-acyl-N-acetylglucosamine deacetylase (306 aa).

Positions 79, 238, and 242 each coordinate Zn(2+). The active-site Proton donor is H265.

This sequence belongs to the LpxC family. It depends on Zn(2+) as a cofactor.

The enzyme catalyses a UDP-3-O-[(3R)-3-hydroxyacyl]-N-acetyl-alpha-D-glucosamine + H2O = a UDP-3-O-[(3R)-3-hydroxyacyl]-alpha-D-glucosamine + acetate. It participates in glycolipid biosynthesis; lipid IV(A) biosynthesis; lipid IV(A) from (3R)-3-hydroxytetradecanoyl-[acyl-carrier-protein] and UDP-N-acetyl-alpha-D-glucosamine: step 2/6. Catalyzes the hydrolysis of UDP-3-O-myristoyl-N-acetylglucosamine to form UDP-3-O-myristoylglucosamine and acetate, the committed step in lipid A biosynthesis. This chain is UDP-3-O-acyl-N-acetylglucosamine deacetylase, found in Shewanella piezotolerans (strain WP3 / JCM 13877).